Reading from the N-terminus, the 136-residue chain is Histone H3.2 (136 aa).

The disordered stretch occupies residues 1–45 (MARTKQTARKSTGGKAPRKQLATKAARKSAPATGGVKKPHRYRPG). The residue at position 3 (arginine 3) is an Asymmetric dimethylarginine; by PRMT6; alternate. Arginine 3 is modified (citrulline; alternate). At threonine 4 the chain carries Phosphothreonine; by HASPIN and VRK1. An Allysine; alternate modification is found at lysine 5. Lysine 5 is subject to N6,N6,N6-trimethyllysine; alternate. Lysine 5 carries the N6,N6-dimethyllysine; alternate modification. The residue at position 5 (lysine 5) is an N6-(2-hydroxyisobutyryl)lysine; alternate. The residue at position 5 (lysine 5) is an N6-(beta-hydroxybutyryl)lysine; alternate. Lysine 5 is subject to N6-acetyllysine; alternate. Position 5 is an N6-crotonyllysine; alternate (lysine 5). An N6-methyllysine; alternate modification is found at lysine 5. Glutamine 6 bears the 5-glutamyl dopamine; alternate mark. 5-glutamyl serotonin; alternate is present on glutamine 6. Residue threonine 7 is modified to Phosphothreonine; by PKC. Arginine 9 carries the citrulline; alternate modification. Arginine 9 carries the post-translational modification Symmetric dimethylarginine; by PRMT5; alternate. Position 10 is an N6,N6,N6-trimethyllysine; alternate (lysine 10). The residue at position 10 (lysine 10) is an N6,N6-dimethyllysine; alternate. Lysine 10 is modified (N6-(2-hydroxyisobutyryl)lysine; alternate). An N6-(beta-hydroxybutyryl)lysine; alternate modification is found at lysine 10. Lysine 10 carries the N6-acetyllysine; alternate modification. Lysine 10 carries the N6-crotonyllysine; alternate modification. The residue at position 10 (lysine 10) is an N6-methyllysine; alternate. Position 10 is an N6-lactoyllysine; alternate (lysine 10). Serine 11 is modified (ADP-ribosylserine; alternate). Phosphoserine; alternate; by AURKB, AURKC, RPS6KA3, RPS6KA4 and RPS6KA5 is present on serine 11. At threonine 12 the chain carries Phosphothreonine; by PKC. Residue lysine 15 is modified to N6-(2-hydroxyisobutyryl)lysine; alternate. Lysine 15 is subject to N6-(beta-hydroxybutyryl)lysine; alternate. Position 15 is an N6-acetyllysine; alternate (lysine 15). Lysine 15 carries the N6-lactoyllysine; alternate modification. Lysine 15 is subject to N6-glutaryllysine; alternate. Lysine 15 carries the post-translational modification N6-succinyllysine; alternate. Arginine 18 is subject to Citrulline; alternate. Position 18 is an asymmetric dimethylarginine; by CARM1; alternate (arginine 18). Lysine 19 and lysine 24 each carry N6-(2-hydroxyisobutyryl)lysine; alternate. Lysine 19 and lysine 24 each carry N6-(beta-hydroxybutyryl)lysine; alternate. N6-acetyllysine; alternate occurs at positions 19 and 24. An N6-crotonyllysine; alternate mark is found at lysine 19 and lysine 24. 2 positions are modified to N6-methyllysine; alternate: lysine 19 and lysine 24. N6-lactoyllysine; alternate is present on residues lysine 19 and lysine 24. Residues lysine 19 and lysine 24 each carry the N6-glutaryllysine; alternate modification. N6-butyryllysine; alternate is present on residues lysine 19 and lysine 24. Lysine 19 carries the N6-decanoyllysine lipid modification. Residue arginine 27 is modified to Citrulline. The residue at position 28 (lysine 28) is an N6,N6,N6-trimethyllysine; alternate. Residue lysine 28 is modified to N6,N6-dimethyllysine; alternate. An N6-(2-hydroxyisobutyryl)lysine; alternate modification is found at lysine 28. Residue lysine 28 is modified to N6-acetyllysine; alternate. N6-crotonyllysine; alternate is present on lysine 28. N6-methyllysine; alternate is present on lysine 28. An N6-lactoyllysine; alternate modification is found at lysine 28. Lysine 28 is modified (N6-glutaryllysine; alternate). Position 29 is an ADP-ribosylserine; alternate (serine 29). A Phosphoserine; alternate; by AURKB, AURKC and RPS6KA5 modification is found at serine 29. At lysine 37 the chain carries N6,N6,N6-trimethyllysine; alternate. N6,N6-dimethyllysine; alternate is present on lysine 37. Residue lysine 37 is modified to N6-(2-hydroxyisobutyryl)lysine; alternate. Position 37 is an N6-acetyllysine; alternate (lysine 37). Lysine 37 is subject to N6-methyllysine; alternate. Residue lysine 38 is modified to N6-methyllysine. The residue at position 42 (tyrosine 42) is a Phosphotyrosine. Residue lysine 57 is modified to N6,N6,N6-trimethyllysine; alternate. An N6-(2-hydroxyisobutyryl)lysine; alternate modification is found at lysine 57. Position 57 is an N6-(beta-hydroxybutyryl)lysine; alternate (lysine 57). An N6-acetyllysine; alternate modification is found at lysine 57. Lysine 57 is modified (N6-crotonyllysine; alternate). An N6-lactoyllysine; alternate modification is found at lysine 57. An N6-glutaryllysine; alternate modification is found at lysine 57. N6-succinyllysine; alternate is present on lysine 57. Lysine 57 is modified (N6-methyllysine; by EHMT2; alternate). A Phosphoserine modification is found at serine 58. N6-(2-hydroxyisobutyryl)lysine; alternate occurs at positions 65 and 80. 2 positions are modified to N6-methyllysine; alternate: lysine 65 and lysine 80. Lysine 80 is subject to N6,N6,N6-trimethyllysine; alternate. Position 80 is an N6,N6-dimethyllysine; alternate (lysine 80). Lysine 80 carries the post-translational modification N6-acetyllysine; alternate. N6-lactoyllysine; alternate is present on lysine 80. The residue at position 80 (lysine 80) is an N6-glutaryllysine; alternate. Lysine 80 carries the post-translational modification N6-succinyllysine; alternate. Threonine 81 carries the phosphothreonine modification. Serine 87 is modified (phosphoserine). Threonine 108 is subject to Phosphothreonine. Cysteine 111 carries the S-palmitoyl cysteine lipid modification. N6-acetyllysine; alternate is present on residues lysine 116 and lysine 123. 2 positions are modified to N6-glutaryllysine; alternate: lysine 116 and lysine 123. Lysine 123 is subject to N6-(2-hydroxyisobutyryl)lysine; alternate. At lysine 123 the chain carries N6-methyllysine; alternate. Position 123 is an N6-succinyllysine; alternate (lysine 123).

The protein belongs to the histone H3 family. The nucleosome is a histone octamer containing two molecules each of H2A, H2B, H3 and H4 assembled in one H3-H4 heterotetramer and two H2A-H2B heterodimers. The octamer wraps approximately 147 bp of DNA. During nucleosome assembly the chaperone ASF1A interacts with the histone H3-H4 heterodimer (via C-terminus of H3); this interaction is direct. Interacts with DNAJC9, CHAF1A and CHAF1B. Interacts with NASP; NASP is a histone chaperone that stabilizes and maintains a soluble pool of Histone H3-H4 dimers. Acetylation is generally linked to gene activation. Acetylation on Lys-10 (H3K9ac) impairs methylation at Arg-9 (H3R8me2s). Acetylation on Lys-19 (H3K18ac) and Lys-24 (H3K24ac) favors methylation at Arg-18 (H3R17me). Acetylation at Lys-123 (H3K122ac) by EP300/p300 plays a central role in chromatin structure: localizes at the surface of the histone octamer and stimulates transcription, possibly by promoting nucleosome instability. In terms of processing, citrullination at Arg-9 (H3R8ci) and/or Arg-18 (H3R17ci) by PADI4 impairs methylation and represses transcription. Post-translationally, asymmetric dimethylation at Arg-18 (H3R17me2a) by CARM1 is linked to gene activation. Symmetric dimethylation at Arg-9 (H3R8me2s) by PRMT5 is linked to gene repression. Asymmetric dimethylation at Arg-3 (H3R2me2a) by PRMT6 is linked to gene repression and is mutually exclusive with H3 Lys-5 methylation (H3K4me2 and H3K4me3). H3R2me2a is present at the 3' of genes regardless of their transcription state and is enriched on inactive promoters, while it is absent on active promoters. Methylation at Lys-5 (H3K4me), Lys-37 (H3K36me) and Lys-80 (H3K79me) are linked to gene activation. Methylation at Lys-5 (H3K4me) facilitates subsequent acetylation of H3 and H4. Methylation at Lys-80 (H3K79me) is associated with DNA double-strand break (DSB) responses and is a specific target for TP53BP1. Methylation at Lys-10 (H3K9me) and Lys-28 (H3K27me) are linked to gene repression. Methylation at Lys-10 (H3K9me) is a specific target for HP1 proteins (CBX1, CBX3 and CBX5) and prevents subsequent phosphorylation at Ser-11 (H3S10ph) and acetylation of H3 and H4. Methylation at Lys-5 (H3K4me) and Lys-80 (H3K79me) require preliminary monoubiquitination of H2B at 'Lys-120'. Methylation at Lys-10 (H3K9me) and Lys-28 (H3K27me) are enriched in inactive X chromosome chromatin. Monomethylation at Lys-57 (H3K56me1) by EHMT2/G9A in G1 phase promotes interaction with PCNA and is required for DNA replication. In terms of processing, phosphorylated at Thr-4 (H3T3ph) by VRK1. Phosphorylated at Thr-4 (H3T3ph) by HASPIN during prophase and dephosphorylated during anaphase. Phosphorylation at Ser-11 (H3S10ph) by AURKB is crucial for chromosome condensation and cell-cycle progression during mitosis and meiosis. In addition phosphorylation at Ser-11 (H3S10ph) by RPS6KA4 and RPS6KA5 is important during interphase because it enables the transcription of genes following external stimulation, like mitogens, stress, growth factors or UV irradiation and result in the activation of genes, such as c-fos and c-jun. Phosphorylation at Ser-11 (H3S10ph), which is linked to gene activation, prevents methylation at Lys-10 (H3K9me) but facilitates acetylation of H3 and H4. Phosphorylation at Ser-11 (H3S10ph) by AURKB mediates the dissociation of HP1 proteins (CBX1, CBX3 and CBX5) from heterochromatin. Phosphorylation at Ser-11 (H3S10ph) is also an essential regulatory mechanism for neoplastic cell transformation. Phosphorylated at Ser-29 (H3S28ph) by MAP3K20 isoform 1, RPS6KA5 or AURKB during mitosis or upon ultraviolet B irradiation. Phosphorylation at Thr-7 (H3T6ph) by PRKCB is a specific tag for epigenetic transcriptional activation that prevents demethylation of Lys-5 (H3K4me) by LSD1/KDM1A. At centromeres, specifically phosphorylated at Thr-12 (H3T11ph) from prophase to early anaphase, by DAPK3 and PKN1. Phosphorylation at Thr-12 (H3T11ph) by PKN1 or isoform M2 of PKM (PKM2) is a specific tag for epigenetic transcriptional activation that promotes demethylation of Lys-10 (H3K9me) by KDM4C/JMJD2C. Phosphorylation at Tyr-42 (H3Y41ph) by JAK2 promotes exclusion of CBX5 (HP1 alpha) from chromatin. Post-translationally, monoubiquitinated by RAG1 in lymphoid cells, monoubiquitination is required for V(D)J recombination. Ubiquitinated by the CUL4-DDB-RBX1 complex in response to ultraviolet irradiation. This may weaken the interaction between histones and DNA and facilitate DNA accessibility to repair proteins. Lysine deamination at Lys-5 (H3K4all) to form allysine is mediated by LOXL2. Allysine formation by LOXL2 only takes place on H3K4me3 and results in gene repression. In terms of processing, crotonylation (Kcr) is specifically present in male germ cells and marks testis-specific genes in post-meiotic cells, including X-linked genes that escape sex chromosome inactivation in haploid cells. Crotonylation marks active promoters and enhancers and confers resistance to transcriptional repressors. It is also associated with post-meiotically activated genes on autosomes. Post-translationally, butyrylation of histones marks active promoters and competes with histone acetylation. It is present during late spermatogenesis. Succinylation at Lys-80 (H3K79succ) by KAT2A takes place with a maximum frequency around the transcription start sites of genes. It gives a specific tag for epigenetic transcription activation. Desuccinylation at Lys-123 (H3K122succ) by SIRT7 in response to DNA damage promotes chromatin condensation and double-strand breaks (DSBs) repair. In terms of processing, serine ADP-ribosylation by PARP1 or PARP2 constitutes the primary form of ADP-ribosylation of proteins in response to DNA damage. Serine ADP-ribosylation at Ser-11 (H3S10ADPr) promotes recruitment of CHD1L. H3S10ADPr is mutually exclusive with phosphorylation at Ser-11 (H3S10ph) and impairs acetylation at Lys-10 (H3K9ac). Post-translationally, serotonylated by TGM2 at Gln-6 (H3Q5ser) during serotonergic neuron differentiation. H3Q5ser is associated with trimethylation of Lys-5 (H3K4me3) and enhances general transcription factor IID (TFIID) complex-binding to H3K4me3, thereby facilitating transcription. Dopaminylated by TGM2 at Gln-6 (H3Q5dop) in ventral tegmental area (VTA) neurons. H3Q5dop mediates neurotransmission-independent role of nuclear dopamine by regulating relapse-related transcriptional plasticity in the reward system. In terms of processing, lactylated in macrophages by EP300/P300 by using lactoyl-CoA directly derived from endogenous or exogenous lactate, leading to stimulates gene transcription.

The protein localises to the nucleus. It is found in the chromosome. Core component of nucleosome. Nucleosomes wrap and compact DNA into chromatin, limiting DNA accessibility to the cellular machineries which require DNA as a template. Histones thereby play a central role in transcription regulation, DNA repair, DNA replication and chromosomal stability. DNA accessibility is regulated via a complex set of post-translational modifications of histones, also called histone code, and nucleosome remodeling. In Cricetulus longicaudatus (Long-tailed dwarf hamster), this protein is Histone H3.2.